Consider the following 242-residue polypeptide: Ubiquitin-conjugating enzyme E2 6 (242 aa).

Over 1 to 220 (MASRQSQKRL…HSTPSFGVQR (220 aa)) the chain is Cytoplasmic. Positions 5–156 (QSQKRLTKEY…NQRFTKQFPD (152 aa)) constitute a UBC core domain. Residue cysteine 87 is the Glycyl thioester intermediate of the active site. Residues 170 to 190 (AREQAAATTDSTDPEKPFDVR) form a disordered region. Residues 221-240 (FTLVGVVVAAFIAAYFNFFS) form a helical membrane-spanning segment.

The protein belongs to the ubiquitin-conjugating enzyme family.

Its subcellular location is the endoplasmic reticulum membrane. The catalysed reaction is S-ubiquitinyl-[E1 ubiquitin-activating enzyme]-L-cysteine + [E2 ubiquitin-conjugating enzyme]-L-cysteine = [E1 ubiquitin-activating enzyme]-L-cysteine + S-ubiquitinyl-[E2 ubiquitin-conjugating enzyme]-L-cysteine.. The protein operates within protein modification; protein ubiquitination. Catalyzes the covalent attachment of ubiquitin to other proteins. Functions in degradation of misfolded or regulated proteins localized in the endoplasmic reticulum (ER) lumen or membrane via the ubiquitin-proteasome system. Cognate E2 conjugating enzyme for the DOA10 ubiquitin ligase complex, which is part of the ERAD-C pathway responsible for the rapid degradation of membrane proteins with misfolded cytoplasmic domains. The sequence is that of Ubiquitin-conjugating enzyme E2 6 (UBC6) from Debaryomyces hansenii (strain ATCC 36239 / CBS 767 / BCRC 21394 / JCM 1990 / NBRC 0083 / IGC 2968) (Yeast).